A 108-amino-acid chain; its full sequence is ATP synthase peripheral stalk subunit F6, mitochondrial (108 aa).

Residues methionine 1 to phenylalanine 32 constitute a mitochondrion transit peptide. Residues lysine 41, lysine 46, and lysine 79 each carry the N6-acetyllysine modification. N6-acetyllysine; alternate is present on residues lysine 84, lysine 94, and lysine 99. N6-succinyllysine; alternate occurs at positions 84, 94, and 99. Lysine 105 bears the N6-acetyllysine mark. A Phosphoserine modification is found at serine 108.

It belongs to the eukaryotic ATPase subunit F6 family. As to quaternary structure, component of the ATP synthase complex composed at least of ATP5F1A/subunit alpha, ATP5F1B/subunit beta, ATP5MC1/subunit c (homooctomer), MT-ATP6/subunit a, MT-ATP8/subunit 8, ATP5ME/subunit e, ATP5MF/subunit f, ATP5MG/subunit g, ATP5MK/subunit k, ATP5MJ/subunit j, ATP5F1C/subunit gamma, ATP5F1D/subunit delta, ATP5F1E/subunit epsilon, ATP5PF/subunit F6, ATP5PB/subunit b, ATP5PD/subunit d, ATP5PO/subunit OSCP. ATP synthase complex consists of a soluble F(1) head domain (subunits alpha(3) and beta(3)) - the catalytic core - and a membrane F(0) domain - the membrane proton channel (subunits c, a, 8, e, f, g, k and j). These two domains are linked by a central stalk (subunits gamma, delta, and epsilon) rotating inside the F1 region and a stationary peripheral stalk (subunits F6, b, d, and OSCP).

The protein localises to the mitochondrion. It localises to the mitochondrion inner membrane. Subunit F6, of the mitochondrial membrane ATP synthase complex (F(1)F(0) ATP synthase or Complex V) that produces ATP from ADP in the presence of a proton gradient across the membrane which is generated by electron transport complexes of the respiratory chain. ATP synthase complex consist of a soluble F(1) head domain - the catalytic core - and a membrane F(1) domain - the membrane proton channel. These two domains are linked by a central stalk rotating inside the F(1) region and a stationary peripheral stalk. During catalysis, ATP synthesis in the catalytic domain of F(1) is coupled via a rotary mechanism of the central stalk subunits to proton translocation. In vivo, can only synthesize ATP although its ATP hydrolase activity can be activated artificially in vitro. Part of the complex F(0) domain. Part of the complex F(0) domain and the peripheric stalk, which acts as a stator to hold the catalytic alpha(3)beta(3) subcomplex and subunit a/ATP6 static relative to the rotary elements. This chain is ATP synthase peripheral stalk subunit F6, mitochondrial, found in Mus musculus (Mouse).